Consider the following 446-residue polypeptide: D(1A) dopamine receptor (446 aa).

Over 1–22 (MAPNTSTMDETGLPVERDFSFR) the chain is Extracellular. N-linked (GlcNAc...) asparagine glycosylation is present at asparagine 4. The chain crosses the membrane as a helical span at residues 23-48 (ILTACFLSLLILSTLLGNTLVCAAVI). At 49 to 59 (RFRHLRSKVTN) the chain is on the cytoplasmic side. A helical membrane pass occupies residues 60–86 (FFVISLAVSDLLVAVLVMPWKAVAEIA). Residues 87–95 (GFWPFGSFC) are Extracellular-facing. Cysteine 95 and cysteine 186 form a disulfide bridge. A helical membrane pass occupies residues 96–118 (NIWVAFDIMCSTASILNLCVISV). The Cytoplasmic portion of the chain corresponds to 119–137 (DRYWAISSPFQYERKMTPK). A helical transmembrane segment spans residues 138 to 162 (AAFILISVAWTLSVLISFIPVQLSW). The Extracellular portion of the chain corresponds to 163 to 192 (HKAKPTWPLDGNFTSLEDAEDDNCDTRLSR). A helical membrane pass occupies residues 193 to 218 (TYAISSSLISFYIPVAIMIVTYTSIY). Residues 219-272 (RIAQKQIRRISALERAAVHAKNCQTTTGNGNPVECSQSESSFKMSFKRETKVLK) are Cytoplasmic-facing. The helical transmembrane segment at 273 to 299 (TLSVIMGVFVCCWLPFFISNCMVPFCG) threads the bilayer. Over 300 to 312 (SEETQPFCIDSIT) the chain is Extracellular. Residues 313–337 (FDVFVWFGWANSSLNPIIYAFNADF) form a helical membrane-spanning segment. The Cytoplasmic portion of the chain corresponds to 338–446 (QKAFSTLLGC…PVTHSGQHST (109 aa)). 2 S-palmitoyl cysteine lipidation sites follow: cysteine 347 and cysteine 351. Residue serine 441 is modified to Phosphoserine.

It belongs to the G-protein coupled receptor 1 family. Interacts with DNAJC14 via its C-terminus. Interacts with DRD2. Interacts with DORIP1.

It is found in the cell membrane. Its subcellular location is the endoplasmic reticulum membrane. The protein resides in the cell projection. It localises to the cilium membrane. The protein localises to the dendrite. It is found in the dendritic spine. Dopamine receptor whose activity is mediated by G proteins which activate adenylyl cyclase. This is D(1A) dopamine receptor (Drd1) from Mus musculus (Mouse).